The primary structure comprises 1239 residues: Erythroid differentiation-related factor 1 (1239 aa).

Disordered regions lie at residues 1-39, 219-269, 517-559, and 620-646; these read MGDP…QGSA, AQPV…REPL, PKKE…DPAD, and KKES…TRGG. 2 stretches are compositionally biased toward low complexity: residues 9-28 and 253-263; these read AEAS…LSQA and SSVSEDPSASS. A compositionally biased stretch (acidic residues) spans 530 to 547; sequence NSDESYSEEEEEMADSDE. 2 TPR repeats span residues 693–726 and 914–953; these read SKAY…HDTY and AQAH…LGTR.

It is found in the nucleus. Functionally, transcription factor involved in erythroid differentiation. Involved in transcriptional activation of the globin gene. This is Erythroid differentiation-related factor 1 (Edrf1) from Mus musculus (Mouse).